Here is a 287-residue protein sequence, read N- to C-terminus: MATKPQDANTTSREAITSKADSPPRPTALIFDSGVGGLSVYQEIRQLLPNLHYIYAFDNVAFPYGEKSGEFIVERVLEIVTAVQQSHPLAIVVIACNTASTVSLPALRERFAFPVVGVVPAIKPAVRLTRNGVVGLLATRATVHASYTLDLIARFATDCKIELLGSSELVEVAETKLHGGVVPLEVLKKILHPWLSMREPPDTIVLGCTHFPLLTEELAQVLPEGTRMVDSGAAIARRTAWLISSQENVISSQDENIAYCMALDEDTDALLPVLQSYGFPKLQKLPI.

Residues 1–15 (MATKPQDANTTSREA) show a composition bias toward polar residues. Residues 1–25 (MATKPQDANTTSREAITSKADSPPR) form a disordered region. Residues 32–33 (DS) and 64–65 (YG) each bind substrate. C96 functions as the Proton donor/acceptor in the catalytic mechanism. 97–98 (NT) is a binding site for substrate. Catalysis depends on C208, which acts as the Proton donor/acceptor. Residue 209–210 (TH) participates in substrate binding.

The protein belongs to the aspartate/glutamate racemases family.

The enzyme catalyses L-glutamate = D-glutamate. The protein operates within cell wall biogenesis; peptidoglycan biosynthesis. In terms of biological role, provides the (R)-glutamate required for cell wall biosynthesis. This Yersinia pseudotuberculosis serotype I (strain IP32953) protein is Glutamate racemase.